We begin with the raw amino-acid sequence, 170 residues long: Peptide deformylase (170 aa).

The Fe cation site is built by Cys91 and His133. Residue Glu134 is part of the active site. His137 is a Fe cation binding site.

This sequence belongs to the polypeptide deformylase family. Requires Fe(2+) as cofactor.

The catalysed reaction is N-terminal N-formyl-L-methionyl-[peptide] + H2O = N-terminal L-methionyl-[peptide] + formate. Removes the formyl group from the N-terminal Met of newly synthesized proteins. Requires at least a dipeptide for an efficient rate of reaction. N-terminal L-methionine is a prerequisite for activity but the enzyme has broad specificity at other positions. In Pectobacterium carotovorum subsp. carotovorum (strain PC1), this protein is Peptide deformylase.